We begin with the raw amino-acid sequence, 256 residues long: N-acetyl-D-glucosamine kinase (256 aa).

Residues 4-11 (GFDMGGTK) and 133-140 (GVGGGLIV) contribute to the ATP site. His157, Cys177, Cys179, and Cys184 together coordinate Zn(2+).

It belongs to the ROK (NagC/XylR) family. NagK subfamily.

The catalysed reaction is N-acetyl-D-glucosamine + ATP = N-acetyl-D-glucosamine 6-phosphate + ADP + H(+). It participates in cell wall biogenesis; peptidoglycan recycling. In terms of biological role, catalyzes the phosphorylation of N-acetyl-D-glucosamine (GlcNAc) derived from cell-wall degradation, yielding GlcNAc-6-P. The chain is N-acetyl-D-glucosamine kinase (nagK) from Yersinia pestis bv. Antiqua (strain Nepal516).